Reading from the N-terminus, the 1182-residue chain is Rho GTPase-activating protein 20 (1182 aa).

Residues 1-40 (MEAMSPQQDALGAQPGRSSSLTGMSRIAGGPGTKKKMKTL) form a disordered region. Residue Ser46 is modified to Phosphoserine. The 101-residue stretch at 85–185 (TLLIDGPVEL…WLSLLQRYIA (101 aa)) folds into the PH domain. Residues 194 to 283 (KSIPLKIFAK…TALLTQGSRD (90 aa)) form the Ras-associating domain. The 187-residue stretch at 365–551 (VSLPDLCEND…FLIENCCRVF (187 aa)) folds into the Rho-GAP domain. Phosphoserine is present on residues Ser704 and Ser730. 6 disordered regions span residues 745–772 (QTQP…KRNT), 803–839 (VASY…QKSS), 935–955 (SYSS…SSQD), 982–1011 (TQRK…GQAS), 1074–1101 (LPSC…EGPG), and 1142–1182 (SGGQ…GTDI). Residues 758–772 (KQSSVTGTDVSKRNT) are compositionally biased toward polar residues. The segment covering 811–824 (SQDHPRKQAFDADP) has biased composition (basic and acidic residues).

Functionally, GTPase activator for the Rho-type GTPases by converting them to an inactive GDP-bound state. In Mus musculus (Mouse), this protein is Rho GTPase-activating protein 20 (Arhgap20).